A 325-amino-acid polypeptide reads, in one-letter code: Probable flavonol synthase 5 (325 aa).

The segment at 1–21 is disordered; that stretch reads MEEERDHNASESSLPSLSKQL. Over residues 10–21 the composition is skewed to polar residues; sequence SESSLPSLSKQL. The Fe2OG dioxygenase domain occupies 180-280; the sequence is TAEYVLRVNF…RISWPVFVAP (101 aa). 188-190 is a 2-oxoglutarate binding site; that stretch reads NFY. Histidine 205, aspartate 207, and histidine 261 together coordinate Fe cation. 271-273 is a binding site for 2-oxoglutarate; sequence RIS.

It belongs to the iron/ascorbate-dependent oxidoreductase family. The cofactor is Fe(2+). As to expression, expressed in young seedlings.

The catalysed reaction is a (2R,3R)-dihydroflavonol + 2-oxoglutarate + O2 = a flavonol + succinate + CO2 + H2O. The protein operates within secondary metabolite biosynthesis; flavonoid biosynthesis. The polypeptide is Probable flavonol synthase 5 (FLS5) (Arabidopsis thaliana (Mouse-ear cress)).